We begin with the raw amino-acid sequence, 89 residues long: UPF0335 protein Nham_1221 (89 aa).

The protein belongs to the UPF0335 family.

The sequence is that of UPF0335 protein Nham_1221 from Nitrobacter hamburgensis (strain DSM 10229 / NCIMB 13809 / X14).